We begin with the raw amino-acid sequence, 199 residues long: Protein-methionine-sulfoxide reductase heme-binding subunit MsrQ (199 aa).

Helical transmembrane passes span 8 to 28, 82 to 102, 116 to 136, 149 to 169, and 171 to 191; these read ITWLKVILHLAGLLPFIWLFW, LWCFAWATLHLTSYALLELGI, PYLTLGIVSWVILFALTLTST, FLHNFVYLVAILTPIHYLWSV, and ILSPQPVIYALLALGLLAWRY.

This sequence belongs to the MsrQ family. As to quaternary structure, heterodimer of a catalytic subunit (MsrP) and a heme-binding subunit (MsrQ). FMN serves as cofactor. Requires heme b as cofactor.

The protein localises to the cell inner membrane. Its function is as follows. Part of the MsrPQ system that repairs oxidized periplasmic proteins containing methionine sulfoxide residues (Met-O), using respiratory chain electrons. Thus protects these proteins from oxidative-stress damage caused by reactive species of oxygen and chlorine generated by the host defense mechanisms. MsrPQ is essential for the maintenance of envelope integrity under bleach stress, rescuing a wide series of structurally unrelated periplasmic proteins from methionine oxidation. MsrQ provides electrons for reduction to the reductase catalytic subunit MsrP, using the quinone pool of the respiratory chain. This chain is Protein-methionine-sulfoxide reductase heme-binding subunit MsrQ, found in Enterobacter sp. (strain 638).